The primary structure comprises 75 residues: uncharacterized protein (75 aa).

A helical transmembrane segment spans residues 7–26; sequence ATAPLFVIVGLAVVLTGATG.

The protein resides in the membrane. This is an uncharacterized protein from Dictyostelium discoideum (Social amoeba).